Reading from the N-terminus, the 826-residue chain is Copper-transporting ATPase 1 (826 aa).

HMA domains are found at residues 15–80 (APTD…YEPK) and 82–147 (IIQE…YDVR). Positions 26, 29, 93, and 96 each coordinate Cu cation. Helical transmembrane passes span 172 to 192 (LVIL…GSHF), 209 to 229 (NLYI…LRFF), 246 to 266 (LVVL…FASG), 270 to 290 (SGTA…ILLG), 429 to 449 (AWFV…WYVF), and 457 to 477 (FALV…MGLA). The active-site 4-aspartylphosphate intermediate is the aspartate 514. 2 residues coordinate Mg(2+): aspartate 713 and aspartate 717. 2 helical membrane passes run 772–792 (FWAF…LYPL) and 795–815 (TLLS…FVLG).

It belongs to the cation transport ATPase (P-type) (TC 3.A.3) family. Type IB subfamily.

Its subcellular location is the cell membrane. It catalyses the reaction Cu(2+)(in) + ATP + H2O = Cu(2+)(out) + ADP + phosphate + H(+). Its function is as follows. Involved in copper transport. In Rhizobium meliloti (strain 1021) (Ensifer meliloti), this protein is Copper-transporting ATPase 1 (actP1).